A 388-amino-acid polypeptide reads, in one-letter code: MKIHEYQAKQLFQKYGVPIPRGKAAFTVEEAKAVGAELGTFPVVVKAQIHAGGRGKGGGVKLAKSAAEVDQYAKGILGMTLVTHQTGPEGRLVKKLLVEEGLPIEKELYLSVLPDRGTSKIVFMASEAGGMDIEEVAAKTPEKIIKVFIDPLLGFKGFHANELAYGLNLKPELIKQFNAMVAALYKLCTDYDCSLVEINPLVLTSDNRVIALDGKINFDDNAMYRHKDIQEYRDLDEEDPFEIEASKFELNYIKMPGGNIGNMVNGAGLAMATMDIIQQAGAAPANFLDVGGGASAEQVENGFRIILADPAVKGVLINIFGGILRCDRLANGVVEAAKKVGIRVPVVIRMEGTNVEQGREILAKSGLNLINAKDVADAAQKIAAVAKG.

The region spanning K9–E244 is the ATP-grasp domain. ATP is bound by residues K46, G53–G55, E99, L102, and E107. The Mg(2+) site is built by N199 and D213. Substrate contacts are provided by residues N265 and G322 to L324.

This sequence belongs to the succinate/malate CoA ligase beta subunit family. Heterotetramer of two alpha and two beta subunits. It depends on Mg(2+) as a cofactor.

It carries out the reaction succinate + ATP + CoA = succinyl-CoA + ADP + phosphate. The enzyme catalyses GTP + succinate + CoA = succinyl-CoA + GDP + phosphate. Its pathway is carbohydrate metabolism; tricarboxylic acid cycle; succinate from succinyl-CoA (ligase route): step 1/1. Its function is as follows. Succinyl-CoA synthetase functions in the citric acid cycle (TCA), coupling the hydrolysis of succinyl-CoA to the synthesis of either ATP or GTP and thus represents the only step of substrate-level phosphorylation in the TCA. The beta subunit provides nucleotide specificity of the enzyme and binds the substrate succinate, while the binding sites for coenzyme A and phosphate are found in the alpha subunit. The sequence is that of Succinate--CoA ligase [ADP-forming] subunit beta from Syntrophobacter fumaroxidans (strain DSM 10017 / MPOB).